The sequence spans 274 residues: Non-structural protein 4 (274 aa).

Belongs to the aquareoviridae NS4 protein family.

The chain is Non-structural protein 4 (S7) from Notemigonus crysoleucas (Golden shiner).